The primary structure comprises 468 residues: 3-isopropylmalate dehydratase large subunit (468 aa).

3 residues coordinate [4Fe-4S] cluster: Cys347, Cys407, and Cys410. The segment covering 424–441 has biased composition (polar residues); sequence SASSSNRNFKGRQGSPSG. The tract at residues 424 to 443 is disordered; that stretch reads SASSSNRNFKGRQGSPSGRT.

The protein belongs to the aconitase/IPM isomerase family. LeuC type 1 subfamily. As to quaternary structure, heterodimer of LeuC and LeuD. The cofactor is [4Fe-4S] cluster.

The enzyme catalyses (2R,3S)-3-isopropylmalate = (2S)-2-isopropylmalate. It functions in the pathway amino-acid biosynthesis; L-leucine biosynthesis; L-leucine from 3-methyl-2-oxobutanoate: step 2/4. In terms of biological role, catalyzes the isomerization between 2-isopropylmalate and 3-isopropylmalate, via the formation of 2-isopropylmaleate. The sequence is that of 3-isopropylmalate dehydratase large subunit from Prochlorococcus marinus (strain MIT 9215).